We begin with the raw amino-acid sequence, 1984 residues long: Vitellogenin receptor Yl (1984 aa).

Positions M1 to S19 are enriched in basic and acidic residues. The segment at M1–R48 is disordered. N30 carries an N-linked (GlcNAc...) asparagine glycan. The span at N30–R48 shows a compositional bias: polar residues. LDL-receptor class A domains are found at residues R89–D125, L128–P167, S183–K221, T226–L263, and L265–H305. 20 disulfide bridges follow: C90/C102, C97/C115, C109/C124, C129/C144, C137/C157, C151/C166, C184/C197, C191/C210, C204/C220, C227/C239, C234/C253, C247/C262, C266/C281, C275/C294, C288/C304, C310/C321, C315/C331, C352/C363, C359/C372, and C374/C387. Residues S306–E343 enclose the EGF-like 1 domain. The EGF-like 2; calcium-binding domain occupies D348 to R388. N-linked (GlcNAc...) asparagine glycans are attached at residues N365, N384, and N429. LDL-receptor class B repeat units follow at residues S441 to T485, Q486 to K528, G529 to Q572, and Q573 to Q615. N-linked (GlcNAc...) asparagine glycosylation is found at N666, N749, and N782. LDL-receptor class B repeat units follow at residues G750–S792, R793–E836, Q884–D925, and P934–H940. N-linked (GlcNAc...) asparagine glycosylation occurs at N1022. LDL-receptor class A domains follow at residues T1024–D1063, L1073–E1110, K1117–E1153, R1157–V1194, and S1197–G1233. Disulfide bonds link C1025-C1040, C1035-C1053, C1047-C1062, C1074-C1087, C1081-C1100, C1094-C1109, C1118-C1130, C1125-C1143, C1137-C1152, C1158-C1170, C1165-C1183, C1177-C1193, C1198-C1210, C1205-C1223, and C1217-C1232. N-linked (GlcNAc...) asparagine glycosylation occurs at N1240. 2 consecutive LDL-receptor class A domains span residues S1242 to G1280 and V1282 to E1319. 6 cysteine pairs are disulfide-bonded: C1243–C1257, C1250–C1270, C1264–C1279, C1283–C1296, C1290–C1309, and C1303–C1318. N1265 is a glycosylation site (N-linked (GlcNAc...) asparagine). N1326 is a glycosylation site (N-linked (GlcNAc...) asparagine). The 38-residue stretch at S1339–A1376 folds into the LDL-receptor class A 13 domain. 5 disulfides stabilise this stretch: C1340–C1352, C1347–C1365, C1359–C1375, C1422–C1432, and C1428–C1441. The EGF-like 3; calcium-binding domain occupies D1418–R1453. Residues N1475 and N1490 are each glycosylated (N-linked (GlcNAc...) asparagine). 2 LDL-receptor class B repeats span residues A1588–Q1637 and Q1638–N1687. The helical transmembrane segment at W1800 to Y1820 threads the bilayer. Over Y1821–S1984 the chain is Cytoplasmic. Residue S1926 is modified to Phosphoserine. Disordered regions lie at residues K1927 to P1951 and S1965 to S1984. The span at D1932 to V1946 shows a compositional bias: gly residues.

It belongs to the LDLR family. In terms of assembly, interacts with osk (isoform A). In terms of tissue distribution, ovary.

It localises to the cell membrane. Its subcellular location is the cytoplasm. The protein localises to the cell cortex. It is found in the cytoplasmic vesicle. The protein resides in the clathrin-coated vesicle membrane. It localises to the early endosome membrane. Its subcellular location is the endosome. The protein localises to the multivesicular body lumen. Functionally, cell surface receptor involved in uptake of vitellogenins (yolk proteins) into developing oocytes by receptor-mediated endocytosis. May also mediate uptake of apolpp/apolipophorins and their incorporation into yolk granules. Along with its ligands, required for maintenance of microtubule plus-end orientation towards the posterior pole of oocytes. Involved in polarized localization of germ plasm components, such as osk mRNA and vas protein, to the oocyte posterior cortex. Receptor-mediated endocytosis of vitellogenin receptor ligands is critical for osk (isoform A) mediated actin reorganization and the anchoring of germ plasm components to the oocyte cortex. The chain is Vitellogenin receptor Yl from Drosophila melanogaster (Fruit fly).